A 253-amino-acid polypeptide reads, in one-letter code: DNA repair protein RecO (253 aa).

Belongs to the RecO family.

Its function is as follows. Involved in DNA repair and RecF pathway recombination. The chain is DNA repair protein RecO from Streptococcus agalactiae serotype Ia (strain ATCC 27591 / A909 / CDC SS700).